The primary structure comprises 550 residues: Efflux pump DEP3 (550 aa).

The segment at 1–33 is disordered; it reads MSEQSTLAGPYTEKPGVESQNPTGDGKASFDET. The next 11 membrane-spanning stretches (helical) occupy residues 44 to 64, 78 to 98, 109 to 129, 139 to 159, 172 to 192, 199 to 219, 242 to 262, 268 to 288, 319 to 339, 351 to 371, and 373 to 393; these read AIAY…NTIV, LELI…ILLW, WVYI…GAAP, VIAG…VSVL, STVV…AFAA, WGFY…MILF, AVIF…GGVV, GTII…IVLL, FLAS…FQFI, LLPL…LMPK, and GLIP…SALM. Residue Asn-399 is glycosylated (N-linked (GlcNAc...) asparagine). Transmembrane regions (helical) follow at residues 410 to 430, 439 to 459, and 515 to 535; these read ILVG…VQSL, AVGA…AICG, and SIWA…WPLF.

Belongs to the major facilitator superfamily. TCR/Tet family.

The protein resides in the cell membrane. Efflux pump; part of the gene cluster that mediates the biosynthesis of depudecin, a highly oxidized eleven-carbon linear polyketide that acts as a histone deacetylase (HDAC) inhibitor and makes a small contribution to pathogenesis. Is presumed either to be responsible for exporting depudecin, to provide self-protection, or both. The protein is Efflux pump DEP3 of Fusarium langsethiae.